The primary structure comprises 151 residues: Ribonuclease H (151 aa).

Residues 1–141 (MKHVDIFTDG…ADELARRGME (141 aa)) form the RNase H type-1 domain. Positions 9, 47, 69, and 133 each coordinate Mg(2+).

Belongs to the RNase H family. In terms of assembly, monomer. The cofactor is Mg(2+).

It is found in the cytoplasm. It carries out the reaction Endonucleolytic cleavage to 5'-phosphomonoester.. Functionally, endonuclease that specifically degrades the RNA of RNA-DNA hybrids. The polypeptide is Ribonuclease H (Rhizobium etli (strain ATCC 51251 / DSM 11541 / JCM 21823 / NBRC 15573 / CFN 42)).